Here is a 181-residue protein sequence, read N- to C-terminus: MAASVKDRAVLDAIFNPLLPLGDCPQEIIEEELPIENTNEDDVKRAKEYEIQGVEKAEAGDFVGALDCFNKAIDVAPLRASGYNNRAQLSRLRGDNQSAMEDLNKAIELSHEHGAAAAQAYTQRGLLHRLEGNDEAASEDFQHGATLGNAFAKAMTVQLNPYAAMCNKMLAEAIGKLSGHA.

TPR repeat units follow at residues alanine 46–arginine 79, serine 81–histidine 113, and alanine 118–phenylalanine 151.

It belongs to the TTC36 family.

The polypeptide is Tetratricopeptide repeat protein 36 homolog (ttc36) (Nematostella vectensis (Starlet sea anemone)).